The sequence spans 632 residues: Extracellular metalloproteinase 2 (632 aa).

An N-terminal signal peptide occupies residues 1 to 19; the sequence is MHGLLLAGLAAALPLGVAG. Residues 20-244 constitute a propeptide that is removed on maturation; the sequence is LPARQQSGLS…VHNVVDYVAS (225 aa). N270 carries N-linked (GlcNAc...) asparagine glycosylation. H429 is a binding site for Zn(2+). E430 is an active-site residue. H433 contacts Zn(2+).

Belongs to the peptidase M36 family. It depends on Zn(2+) as a cofactor.

The protein resides in the secreted. In terms of biological role, secreted metalloproteinase probably acting as a virulence factor. In Trichophyton tonsurans (Scalp ringworm fungus), this protein is Extracellular metalloproteinase 2 (MEP2).